Reading from the N-terminus, the 175-residue chain is Large ribosomal subunit protein uL10 (175 aa).

It belongs to the universal ribosomal protein uL10 family. As to quaternary structure, part of the ribosomal stalk of the 50S ribosomal subunit. The N-terminus interacts with L11 and the large rRNA to form the base of the stalk. The C-terminus forms an elongated spine to which L12 dimers bind in a sequential fashion forming a multimeric L10(L12)X complex.

In terms of biological role, forms part of the ribosomal stalk, playing a central role in the interaction of the ribosome with GTP-bound translation factors. The polypeptide is Large ribosomal subunit protein uL10 (Picosynechococcus sp. (strain ATCC 27264 / PCC 7002 / PR-6) (Agmenellum quadruplicatum)).